A 518-amino-acid polypeptide reads, in one-letter code: Putative BTB/POZ domain and WD-repeat protein R731 (518 aa).

In terms of domain architecture, BTB spans 22 to 92 (TDCQLHLTDS…FYGFPLEEPN (71 aa)). The tract at residues 224–246 (NHEESSDDEVNDDEDTDNEDTDD) is disordered. Positions 228-246 (SSDDEVNDDEDTDNEDTDD) are enriched in acidic residues. WD repeat units lie at residues 391 to 430 (NHSTTINHILYSPKSKYFIFCDENSIIYVYSTKDNYSLIK) and 437 to 475 (FLKFGVKDFEFMTSKIIVAIDIKGKICIWNIETEQIIQN).

This sequence belongs to the mimivirus BTB/WD family.

This chain is Putative BTB/POZ domain and WD-repeat protein R731, found in Acanthamoeba polyphaga (Amoeba).